Here is a 150-residue protein sequence, read N- to C-terminus: Deoxyuridine 5'-triphosphate nucleotidohydrolase (150 aa).

Substrate-binding positions include Arg70–Gly72, Asn83, and Thr87–Asp89.

The protein belongs to the dUTPase family. It depends on Mg(2+) as a cofactor.

It carries out the reaction dUTP + H2O = dUMP + diphosphate + H(+). The protein operates within pyrimidine metabolism; dUMP biosynthesis; dUMP from dCTP (dUTP route): step 2/2. Functionally, this enzyme is involved in nucleotide metabolism: it produces dUMP, the immediate precursor of thymidine nucleotides and it decreases the intracellular concentration of dUTP so that uracil cannot be incorporated into DNA. The chain is Deoxyuridine 5'-triphosphate nucleotidohydrolase from Desulfotalea psychrophila (strain LSv54 / DSM 12343).